Here is a 214-residue protein sequence, read N- to C-terminus: Thiamine import ATP-binding protein ThiQ (214 aa).

The 211-residue stretch at 2–212 folds into the ABC transporter domain; it reads IKLNTIFDYP…KNGQATEREI (211 aa). 31–38 contributes to the ATP binding site; that stretch reads GESGAGKS.

The protein belongs to the ABC transporter superfamily. Thiamine importer (TC 3.A.1.19.1) family. In terms of assembly, the complex is composed of two ATP-binding proteins (ThiQ), two transmembrane proteins (ThiP) and a solute-binding protein (ThiB).

Its subcellular location is the cell inner membrane. The enzyme catalyses thiamine(out) + ATP + H2O = thiamine(in) + ADP + phosphate + H(+). Part of the ABC transporter complex ThiBPQ involved in thiamine import. Responsible for energy coupling to the transport system. In Histophilus somni (strain 129Pt) (Haemophilus somnus), this protein is Thiamine import ATP-binding protein ThiQ.